Here is a 1013-residue protein sequence, read N- to C-terminus: Chitin synthase A (1013 aa).

N-linked (GlcNAc...) asparagine glycosylation is present at N10. 2 disordered regions span residues 26 to 83 and 95 to 218; these read RYSY…AADW and ERAD…RRGV. Low complexity predominate over residues 64–81; sequence TASRPASPARPWSPTRAA. Residues 154–173 show a composition bias toward polar residues; sequence TISSRHGPQGSVQSFTSEST. N194 and N316 each carry an N-linked (GlcNAc...) asparagine glycan. A run of 5 helical transmembrane segments spans residues 646 to 666, 686 to 706, 721 to 741, 759 to 779, and 792 to 811; these read LLQLIFTYFGLANFYLAFFFI, IFIVLRYACVLVMCLQFIFSM, MIVYSIVMAYTAFCTLYLIVL, LFVNIVVSLLSTVGLYFFTSF, and AQYFALLPSYICTLQCYAFC. N837 carries an N-linked (GlcNAc...) asparagine glycan. Transmembrane regions (helical) follow at residues 892-912 and 919-939; these read VSVWMVANVVLAMAVSEVYGV and VYLAIILWSVAVLAIIRAIGS. N-linked (GlcNAc...) asparagine glycans are attached at residues N967, N980, N989, and N995.

This sequence belongs to the chitin synthase family. Class II subfamily. Mainly expressed in the metulae, phialides, and conidia.

The protein localises to the cell membrane. It localises to the cell septum. It carries out the reaction [(1-&gt;4)-N-acetyl-beta-D-glucosaminyl](n) + UDP-N-acetyl-alpha-D-glucosamine = [(1-&gt;4)-N-acetyl-beta-D-glucosaminyl](n+1) + UDP + H(+). In terms of biological role, polymerizes chitin, a structural polymer of the cell wall and septum, by transferring the sugar moiety of UDP-GlcNAc to the non-reducing end of the growing chitin polymer. Seems not to be involved in hyphal growth, but, with chsC, chsA shares critical functions in hyphal wall integrity and differentiation. ChsA and chsC share also overlapping roles in septum formation. Invoved in the production of the asexual spores (conidia) that are formed by differentiated aerial hyphae called conidiophores. The polypeptide is Chitin synthase A (Emericella nidulans (strain FGSC A4 / ATCC 38163 / CBS 112.46 / NRRL 194 / M139) (Aspergillus nidulans)).